The following is a 430-amino-acid chain: Probable carboxypeptidase AO090003000058 (430 aa).

Residues 1–16 (MKSIYSLVLCTALTAA) form the signal peptide. The N-linked (GlcNAc...) asparagine glycan is linked to asparagine 84. Aspartate 156 provides a ligand contact to Zn(2+). Glutamate 188 acts as the Proton acceptor in catalysis. Glutamate 189 contacts Zn(2+). The N-linked (GlcNAc...) asparagine glycan is linked to asparagine 285.

The protein belongs to the peptidase M20A family. It depends on Zn(2+) as a cofactor.

The protein resides in the secreted. The polypeptide is Probable carboxypeptidase AO090003000058 (Aspergillus oryzae (strain ATCC 42149 / RIB 40) (Yellow koji mold)).